The chain runs to 70 residues: Small ribosomal subunit protein bS21 (70 aa).

It belongs to the bacterial ribosomal protein bS21 family.

The protein is Small ribosomal subunit protein bS21 of Wolinella succinogenes (strain ATCC 29543 / DSM 1740 / CCUG 13145 / JCM 31913 / LMG 7466 / NCTC 11488 / FDC 602W) (Vibrio succinogenes).